Reading from the N-terminus, the 82-residue chain is Small ribosomal subunit protein bS16 (82 aa).

The protein belongs to the bacterial ribosomal protein bS16 family.

This is Small ribosomal subunit protein bS16 from Alcanivorax borkumensis (strain ATCC 700651 / DSM 11573 / NCIMB 13689 / SK2).